The primary structure comprises 318 residues: Deacetoxycephalosporin C hydroxylase (318 aa).

Positions Asp-158–Pro-271 constitute a Fe2OG dioxygenase domain.

It belongs to the iron/ascorbate-dependent oxidoreductase family. As to quaternary structure, monomer. Fe cation is required as a cofactor.

It carries out the reaction deacetoxycephalosporin C + 2-oxoglutarate + O2 = deacetylcephalosporin C + succinate + CO2. It participates in antibiotic biosynthesis; cephalosporin C biosynthesis. Hydroxylation of desacetoxicephalosporin C in 3'position to form deacetylcephalosporin C. This is Deacetoxycephalosporin C hydroxylase (cefF) from Streptomyces clavuligerus.